The following is a 639-amino-acid chain: 3D-(3,5/4)-trihydroxycyclohexane-1,2-dione hydrolase (639 aa).

Position 65 (E65) interacts with thiamine diphosphate. Residues 437–517 (SLPGDLQRMW…INIILFDNSG (81 aa)) are thiamine pyrophosphate binding. Mg(2+)-binding residues include D488 and N515.

Belongs to the TPP enzyme family. It depends on Mg(2+) as a cofactor. The cofactor is thiamine diphosphate.

It catalyses the reaction 3D-3,5/4-trihydroxycyclohexane-1,2-dione + H2O = 5-deoxy-D-glucuronate + H(+). Its pathway is polyol metabolism; myo-inositol degradation into acetyl-CoA; acetyl-CoA from myo-inositol: step 3/7. Functionally, involved in the cleavage of the C1-C2 bond of 3D-(3,5/4)-trihydroxycyclohexane-1,2-dione (THcHDO) to yield 5-deoxy-glucuronate (5DG). This chain is 3D-(3,5/4)-trihydroxycyclohexane-1,2-dione hydrolase, found in Geobacillus thermodenitrificans (strain NG80-2).